Reading from the N-terminus, the 488-residue chain is Lysine--tRNA ligase (488 aa).

Positions 397 and 404 each coordinate Mg(2+).

This sequence belongs to the class-II aminoacyl-tRNA synthetase family. Homodimer. The cofactor is Mg(2+).

Its subcellular location is the cytoplasm. It catalyses the reaction tRNA(Lys) + L-lysine + ATP = L-lysyl-tRNA(Lys) + AMP + diphosphate. The polypeptide is Lysine--tRNA ligase (lysS) (Mycoplasmopsis fermentans (strain ATCC 19989 / NBRC 14854 / NCTC 10117 / PG18) (Mycoplasma fermentans)).